The chain runs to 535 residues: MIITTPRRANMSSESGSSASTVHYAKPVLRHVPMPSSTTPSSIGSSSSSSSSYASSTKQTPPRSPVIRYPTVVVSKNSIATPSSSLTPQGTPSYAVPVSRNQMQYSASKLQYEHMRHRCKMLDDENQKLMRMQSDVVNDANRRVQMHVNEIRMLKEDNRKLAISNKELRDLSCFLDDDRQKTRKLAREWQKFGRYTSSLMKQEVDSYHQKMVSIEEKLCTKEREVDELRQLCMYLDEQRQSLMSNAAANVDCDNESEDLGCGSSEQSGGSEGHNDEEKHHEFNKCFNKHKESTLRRIMATSMCSEPSEEEERREVSKRERSRLLGYIQSLENRIKHLEMSQNHESFWNSSSNVGSDCDEKTIIERGWLGEEVMSNSEDCHLELKPVMTTSSTSSSHIFGNDKCPMFDSMTSNMTSSGCTTYASSGTDGDSVFVIGDEIDIGNLEVRTLSRIDEEATSASDTLKESARMPPKIAPPICSSLVLTNFDNMSEDCAPRLMRSASETCRPTTTLISSTQPAQRSVSVEKNNNNNVHTHN.

The tract at residues 1-67 is disordered; it reads MIITTPRRAN…KQTPPRSPVI (67 aa). Positions 36–57 are enriched in low complexity; sequence SSTTPSSIGSSSSSSSSYASST. Coiled coils occupy residues 109–172 and 198–242; these read KLQY…RDLS and SLMK…RQSL. Disordered regions lie at residues 254–277 and 503–535; these read NESE…NDEE and TCRP…HTHN. Residues 503 to 525 are compositionally biased toward polar residues; the sequence is TCRPTTTLISSTQPAQRSVSVEK. Low complexity predominate over residues 526–535; that stretch reads NNNNNVHTHN.

This sequence belongs to the CCDC85 family. In terms of assembly, interacts with pac-1 and jac-1.

It is found in the cell junction. The protein resides in the adherens junction. Its function is as follows. Linker protein which helps to recruit the Rho GTPase-activating protein, pac-1, to adherens junctions. The sequence is that of PAC-1 interacting and coiled-coil domain-containing protein 1 from Caenorhabditis elegans.